The following is a 435-amino-acid chain: Methionine aminopeptidase 2-2 (435 aa).

The segment at 1–92 is disordered; that stretch reads MAAQTTEKLQ…VPVSNLFPNN (92 aa). Positions 24–33 are enriched in low complexity; that stretch reads DAPAAGQAEA. Positions 34-45 are enriched in acidic residues; the sequence is GEAEEDSDDEKD. Over residues 59–73 the composition is skewed to basic residues; it reads AKKKKRKSKKKKKGG. Histidine 197 serves as a coordination point for substrate. The a divalent metal cation site is built by aspartate 217, aspartate 228, and histidine 297. Residue histidine 305 participates in substrate binding. The a divalent metal cation site is built by glutamate 330 and glutamate 425.

The protein belongs to the peptidase M24A family. Methionine aminopeptidase eukaryotic type 2 subfamily. The cofactor is Co(2+). Zn(2+) serves as cofactor. It depends on Mn(2+) as a cofactor. Fe(2+) is required as a cofactor.

Its subcellular location is the cytoplasm. The enzyme catalyses Release of N-terminal amino acids, preferentially methionine, from peptides and arylamides.. Functionally, cotranslationally removes the N-terminal methionine from nascent proteins. The N-terminal methionine is often cleaved when the second residue in the primary sequence is small and uncharged (Met-Ala-, Cys, Gly, Pro, Ser, Thr, or Val). In Aspergillus clavatus (strain ATCC 1007 / CBS 513.65 / DSM 816 / NCTC 3887 / NRRL 1 / QM 1276 / 107), this protein is Methionine aminopeptidase 2-2.